Reading from the N-terminus, the 64-residue chain is Disintegrin schistatin (64 aa).

A Disintegrin domain is found at 1–64 (NSVHPCCDPV…PDCPRNRYNV (64 aa)). Disulfide bonds link cysteine 6-cysteine 29, cysteine 20-cysteine 26, cysteine 25-cysteine 50, and cysteine 38-cysteine 57. Residues 42–44 (RGD) carry the Cell attachment site motif.

Belongs to the disintegrin family. Dimeric disintegrin subfamily. As to quaternary structure, homodimer; disulfide-linked. Expressed by the venom gland.

The protein localises to the secreted. In terms of biological role, may bind to both alpha-IIb/beta-3 (ITGA2B/ITGB3) and alpha-V/beta-3 (ITGAV/ITGB3) integrins, and may inhibit platelet aggregation. This is Disintegrin schistatin from Echis carinatus (Saw-scaled viper).